The chain runs to 101 residues: Putative defensin-like protein 307 (101 aa).

The signal sequence occupies residues Met-1–Ala-22. 3 disulfides stabilise this stretch: Cys-29–Cys-49, Cys-35–Cys-54, and Cys-40–Cys-56.

Belongs to the DEFL family.

The protein resides in the secreted. The chain is Putative defensin-like protein 307 from Arabidopsis thaliana (Mouse-ear cress).